We begin with the raw amino-acid sequence, 564 residues long: Dihydroxy-acid dehydratase (564 aa).

[2Fe-2S] cluster is bound at residue Cys53. Mg(2+) is bound at residue Asp85. [2Fe-2S] cluster is bound at residue Cys126. Residues Asp127 and Lys128 each contribute to the Mg(2+) site. An N6-carboxylysine modification is found at Lys128. Residue Cys203 coordinates [2Fe-2S] cluster. Mg(2+) is bound at residue Glu454. Residue Ser480 is the Proton acceptor of the active site.

The protein belongs to the IlvD/Edd family. As to quaternary structure, homodimer. [2Fe-2S] cluster serves as cofactor. It depends on Mg(2+) as a cofactor.

It catalyses the reaction (2R)-2,3-dihydroxy-3-methylbutanoate = 3-methyl-2-oxobutanoate + H2O. It carries out the reaction (2R,3R)-2,3-dihydroxy-3-methylpentanoate = (S)-3-methyl-2-oxopentanoate + H2O. The protein operates within amino-acid biosynthesis; L-isoleucine biosynthesis; L-isoleucine from 2-oxobutanoate: step 3/4. It functions in the pathway amino-acid biosynthesis; L-valine biosynthesis; L-valine from pyruvate: step 3/4. Functionally, functions in the biosynthesis of branched-chain amino acids. Catalyzes the dehydration of (2R,3R)-2,3-dihydroxy-3-methylpentanoate (2,3-dihydroxy-3-methylvalerate) into 2-oxo-3-methylpentanoate (2-oxo-3-methylvalerate) and of (2R)-2,3-dihydroxy-3-methylbutanoate (2,3-dihydroxyisovalerate) into 2-oxo-3-methylbutanoate (2-oxoisovalerate), the penultimate precursor to L-isoleucine and L-valine, respectively. The polypeptide is Dihydroxy-acid dehydratase (Clavibacter michiganensis subsp. michiganensis (strain NCPPB 382)).